Reading from the N-terminus, the 501-residue chain is Probable cytosol aminopeptidase (501 aa).

Mn(2+) is bound by residues Lys257 and Asp262. Residue Lys269 is part of the active site. Mn(2+) contacts are provided by Asp281, Asp341, and Glu343. Arg345 is an active-site residue.

The protein belongs to the peptidase M17 family. It depends on Mn(2+) as a cofactor.

It localises to the cytoplasm. It carries out the reaction Release of an N-terminal amino acid, Xaa-|-Yaa-, in which Xaa is preferably Leu, but may be other amino acids including Pro although not Arg or Lys, and Yaa may be Pro. Amino acid amides and methyl esters are also readily hydrolyzed, but rates on arylamides are exceedingly low.. The enzyme catalyses Release of an N-terminal amino acid, preferentially leucine, but not glutamic or aspartic acids.. Presumably involved in the processing and regular turnover of intracellular proteins. Catalyzes the removal of unsubstituted N-terminal amino acids from various peptides. The protein is Probable cytosol aminopeptidase of Synechococcus sp. (strain RCC307).